Consider the following 124-residue polypeptide: uncharacterized protein (124 aa).

Residues 83–100 (VTCFSLYTICYRIVLIWA) traverse the membrane as a helical segment.

Its subcellular location is the membrane. This is an uncharacterized protein from Saccharomyces cerevisiae (strain ATCC 204508 / S288c) (Baker's yeast).